A 191-amino-acid chain; its full sequence is Large ribosomal subunit protein eL15 (191 aa).

It belongs to the eukaryotic ribosomal protein eL15 family.

The chain is Large ribosomal subunit protein eL15 (rpl15e) from Pyrobaculum aerophilum (strain ATCC 51768 / DSM 7523 / JCM 9630 / CIP 104966 / NBRC 100827 / IM2).